A 144-amino-acid polypeptide reads, in one-letter code: MKTFSPKPQDITRDWYVVDAEDKILGRLAAQIAHRLRGKHKPEFAPHVDNGDFIVVVNCEKIAVTGKKLSDKKYYRYSGYVGGLREQTLANVLATKPERALINAVKGMLPRNRLGRAMLKKLKVYAGSEHPHQAQNPQALELKY.

This sequence belongs to the universal ribosomal protein uL13 family. As to quaternary structure, part of the 50S ribosomal subunit.

Functionally, this protein is one of the early assembly proteins of the 50S ribosomal subunit, although it is not seen to bind rRNA by itself. It is important during the early stages of 50S assembly. In Oleidesulfovibrio alaskensis (strain ATCC BAA-1058 / DSM 17464 / G20) (Desulfovibrio alaskensis), this protein is Large ribosomal subunit protein uL13.